We begin with the raw amino-acid sequence, 1293 residues long: Period circadian protein homolog 1 (1293 aa).

The tract at residues 1–134 is disordered; the sequence is MSGPLEGADG…SSEQSARART (134 aa). Positions 1–151 are interaction with BTRC; it reads MSGPLEGADG…LRELKLRLPP (151 aa). Composition is skewed to low complexity over residues 48 to 57 and 64 to 115; these read NSNGSSGNES and GASQ…ASSE. A compositionally biased stretch (polar residues) spans 116–132; that stretch reads QDNPSTSGCSSEQSARA. T121 carries the phosphothreonine; by CSNK1E modification. Residues S122 and S126 each carry the phosphoserine; by CSNK1E modification. Positions 138–147 match the Nuclear export signal 1 motif; the sequence is LMTALRELKL. 2 PAS domains span residues 208–275 and 348–414; these read ITSE…PSRL and YEAP…KILQ. The 44-residue stretch at 422 to 465 folds into the PAC domain; sequence HSPIRFCARNGEYVTMDTSWAGFVHPWSRKVAFVLGRHKVRTAP. A Nuclear export signal 2 motif is present at residues 489-498; the sequence is LSEQIHRLLL. Disordered stretches follow at residues 509-544 and 647-697; these read LCGV…PAPV and TKRK…KEPV. 2 stretches are compositionally biased toward low complexity: residues 513–533 and 652–661; these read GPLM…SNGG and ASSSCTASSA. The segment at 596 to 814 is required for phosphorylation by CSNK1E; it reads ELEVAPAPDQ…GLDTSSVAPS (219 aa). Phosphoserine occurs at positions 660, 662, and 703. 4 disordered regions span residues 748-771, 808-870, 935-1094, and 1204-1293; these read GLAP…APDA, TSSV…PPAT, SQAP…SKYF, and SVQD…NGTS. A compositionally biased stretch (pro residues) spans 750 to 768; that stretch reads APGPAPSPAPSPTVAPDPA. S814 carries the phosphoserine modification. The Nuclear localization signal signature appears at 823 to 839; that stretch reads IPSGRRHHCRSKAKRSR. Basic residues predominate over residues 826–843; the sequence is GRRHHCRSKAKRSRHHQT. Composition is skewed to pro residues over residues 856-870 and 952-962; these read SPVP…PPAT and PSLPPPPPSPP. Over residues 969–982 the composition is skewed to polar residues; that stretch reads LFNSRCSSPLQLNL. Phosphoserine occurs at positions 975 and 976. Positions 978-985 match the Nuclear export signal 3 motif; it reads LQLNLLQL. The span at 1032–1058 shows a compositional bias: low complexity; sequence LSGSSDLLELLLQEDSRSGTGSAASGS. Residues 1039–1043 carry the LXXLL motif; that stretch reads LELLL. Residues 1059–1073 are compositionally biased toward gly residues; the sequence is LGSGLGSGSGSGSHE. A compositionally biased stretch (low complexity) spans 1074–1091; sequence GGSTSASITRSSQSSHTS. The interval 1145-1293 is CRY binding domain; the sequence is SRDAASVLKQ…ALPAEENGTS (149 aa). Gly residues predominate over residues 1232–1250; that stretch reads GEGGGVGGGGGGVGGGGGD. Residues 1255-1269 are compositionally biased toward polar residues; it reads AQTQIGTKGSSSQDS.

In terms of assembly, homodimer. Component of the circadian core oscillator, which includes the CRY proteins, CLOCK or NPAS2, BMAL1 or BMAL2, CSNK1D and/or CSNK1E, TIMELESS, and the PER proteins. Interacts directly with TIMELESS, PER2, PER3, CRY1 and CRY2. Interacts with BMAL1 and CLOCK. Interacts with GPRASP1. Interacts (phosphorylated) with BTRC and FBXW11; the interactions trigger proteasomal degradation. Interacts with NONO and WDR5. Interacts with SFPQ. Interacts with USP2. Interacts with HNF4A. Post-translationally, phosphorylated on serine residues by CSNK1D, CSNK1E and probably also by CSNK1G2. Phosphorylation by CSNK1D or CSNK1E promotes nuclear location of PER proteins as well as ubiquitination and subsequent degradation. May be dephosphorylated by PP1. Ubiquitinated; requires phosphorylation by CSNK1E and interaction with BTRC and FBXW11. Deubiquitinated by USP2. Expressed in pancreas. In the CNS, highly expressed in the SCN, internal granular layer of granular cells of the olfactory bulb, tuberculum olfactorium, piriform cortex, gyrus dentatus of the hippocampus, cerebellum, pars tuberalis/median eminence, and pituitary, and moderately in the tenia tecta, caudate putamen, accumbens nucleus, spinal cord, superior and inferior colliculus and pineal gland.

The protein resides in the nucleus. The protein localises to the cytoplasm. In terms of biological role, transcriptional repressor which forms a core component of the circadian clock. The circadian clock, an internal time-keeping system, regulates various physiological processes through the generation of approximately 24 hour circadian rhythms in gene expression, which are translated into rhythms in metabolism and behavior. It is derived from the Latin roots 'circa' (about) and 'diem' (day) and acts as an important regulator of a wide array of physiological functions including metabolism, sleep, body temperature, blood pressure, endocrine, immune, cardiovascular, and renal function. Consists of two major components: the central clock, residing in the suprachiasmatic nucleus (SCN) of the brain, and the peripheral clocks that are present in nearly every tissue and organ system. Both the central and peripheral clocks can be reset by environmental cues, also known as Zeitgebers (German for 'timegivers'). The predominant Zeitgeber for the central clock is light, which is sensed by retina and signals directly to the SCN. The central clock entrains the peripheral clocks through neuronal and hormonal signals, body temperature and feeding-related cues, aligning all clocks with the external light/dark cycle. Circadian rhythms allow an organism to achieve temporal homeostasis with its environment at the molecular level by regulating gene expression to create a peak of protein expression once every 24 hours to control when a particular physiological process is most active with respect to the solar day. Transcription and translation of core clock components (CLOCK, NPAS2, BMAL1, BMAL2, PER1, PER2, PER3, CRY1 and CRY2) plays a critical role in rhythm generation, whereas delays imposed by post-translational modifications (PTMs) are important for determining the period (tau) of the rhythms (tau refers to the period of a rhythm and is the length, in time, of one complete cycle). A diurnal rhythm is synchronized with the day/night cycle, while the ultradian and infradian rhythms have a period shorter and longer than 24 hours, respectively. Disruptions in the circadian rhythms contribute to the pathology of cardiovascular diseases, cancer, metabolic syndromes and aging. A transcription/translation feedback loop (TTFL) forms the core of the molecular circadian clock mechanism. Transcription factors, CLOCK or NPAS2 and BMAL1 or BMAL2, form the positive limb of the feedback loop, act in the form of a heterodimer and activate the transcription of core clock genes and clock-controlled genes (involved in key metabolic processes), harboring E-box elements (5'-CACGTG-3') within their promoters. The core clock genes: PER1/2/3 and CRY1/2 which are transcriptional repressors form the negative limb of the feedback loop and interact with the CLOCK|NPAS2-BMAL1|BMAL2 heterodimer inhibiting its activity and thereby negatively regulating their own expression. This heterodimer also activates nuclear receptors NR1D1/2 and RORA/B/G, which form a second feedback loop and which activate and repress BMAL1 transcription, respectively. Regulates circadian target genes expression at post-transcriptional levels, but may not be required for the repression at transcriptional level. Controls PER2 protein decay. Represses CRY2 preventing its repression on CLOCK/BMAL1 target genes such as FXYD5 and SCNN1A in kidney and PPARA in liver. Besides its involvement in the maintenance of the circadian clock, has an important function in the regulation of several processes. Participates in the repression of glucocorticoid receptor NR3C1/GR-induced transcriptional activity by reducing the association of NR3C1/GR to glucocorticoid response elements (GREs) by BMAL1:CLOCK. Plays a role in the modulation of the neuroinflammatory state via the regulation of inflammatory mediators release, such as CCL2 and IL6. In spinal astrocytes, negatively regulates the MAPK14/p38 and MAPK8/JNK MAPK cascades as well as the subsequent activation of NFkappaB. Coordinately regulates the expression of multiple genes that are involved in the regulation of renal sodium reabsorption. Can act as gene expression activator in a gene and tissue specific manner, in kidney enhances WNK1 and SLC12A3 expression in collaboration with CLOCK. Modulates hair follicle cycling. Represses the CLOCK-BMAL1 induced transcription of BHLHE40/DEC1. This chain is Period circadian protein homolog 1, found in Rattus norvegicus (Rat).